The primary structure comprises 1649 residues: eIF-2-alpha kinase GCN2 (1649 aa).

Disordered regions lie at residues 1–25, 138–158, and 227–256; these read MAGG…RQDH, NKPP…QEEQ, and HGGS…YSVC. Residues 25 to 137 form the RWD domain; it reads HELQALEAIY…YHVQSFLSEH (113 aa). Positions 146–205 form a coiled coil; the sequence is HEEMLERRAQEEQQRLLEAKRKEEQEQREILHEIQRRKEEIKEEKKRKEMAKQERLEIAS. Ser-230 is subject to Phosphoserine. Over residues 237 to 249 the composition is skewed to basic residues; sequence GKHRANSSGRSRR. Protein kinase domains follow at residues 296 to 539 and 590 to 1001; these read VYNA…HSFI and FEEL…SELL. ATP is bound by residues 596–604 and Lys-619; that span reads LGKGAFGAV. 2 disordered regions span residues 660–750 and 766–788; these read ERPA…QSFL and ENSK…ESEP. Phosphothreonine is present on Thr-667. The span at 705-717 shows a compositional bias: polar residues; the sequence is LSSSVEWSTSGER. The span at 731 to 740 shows a compositional bias: acidic residues; the sequence is SDDEDDDEDE. Residues 778-787 show a composition bias toward basic and acidic residues; sequence NEKNGCHESE. The Proton acceptor role is filled by Asp-848. The residue at position 871 (Thr-871) is a Phosphothreonine. Phosphothreonine; by autocatalysis occurs at positions 899 and 904. The tract at residues 1022-1493 is histidyl-tRNA synthetase-like; sequence VDGKAYRTMM…DHVLQKLRTK (472 aa). Residue Lys-1259 is modified to N6-acetyllysine.

The protein belongs to the protein kinase superfamily. Ser/Thr protein kinase family. GCN2 subfamily. In terms of assembly, homodimer; homodimerization is important for kinase activation by uncharged tRNAs. Interacts with GCN1; this interaction stimulates EIF2AK4/GCN2 kinase activity and is impaired by IMPACT upon a variety of stress conditions, such as amino acid depletion, UV-C irradiation, proteasome inhibitor treatment and glucose deprivation. Interacts with DNAJC3; this interaction inhibits EIF2AK4/GCN2 kinase activity during endoplasmic reticulum (ER), hypothermic and amino acid-starving stress conditions. Interacts with MAP3K20; activates EIF2AK4/GCN2 kinase activity in response to moderate ribotoxic stress. (Microbial infection) Interacts with hepatitis E virus (HEV) ORF1 protease; this interaction inhibits dimerization of EIF2AK4 and prevents EIF2AK4-mediated phosphorylation of EIF2A. Autophosphorylated; autophosphorylation on Thr-899 is increased upon amino acid starvation and in UV irradiation cells and inhibited in presence of IMPACT. As to expression, widely expressed. Expressed in lung, smooth muscle cells and macrophages.

It is found in the cytoplasm. The enzyme catalyses L-seryl-[protein] + ATP = O-phospho-L-seryl-[protein] + ADP + H(+). It catalyses the reaction L-threonyl-[protein] + ATP = O-phospho-L-threonyl-[protein] + ADP + H(+). In terms of biological role, metabolic-stress sensing protein kinase that phosphorylates the alpha subunit of eukaryotic translation initiation factor 2 (EIF2S1/eIF-2-alpha) in response to low amino acid availability. Plays a role as an activator of the integrated stress response (ISR) required for adaptation to amino acid starvation. EIF2S1/eIF-2-alpha phosphorylation in response to stress converts EIF2S1/eIF-2-alpha into a global protein synthesis inhibitor, leading to a global attenuation of cap-dependent translation, and thus to a reduced overall utilization of amino acids, while concomitantly initiating the preferential translation of ISR-specific mRNAs, such as the transcriptional activator ATF4, and hence allowing ATF4-mediated reprogramming of amino acid biosynthetic gene expression to alleviate nutrient depletion. Binds uncharged tRNAs. Required for the translational induction of protein kinase PRKCH following amino acid starvation. Involved in cell cycle arrest by promoting cyclin D1 mRNA translation repression after the unfolded protein response pathway (UPR) activation or cell cycle inhibitor CDKN1A/p21 mRNA translation activation in response to amino acid deprivation. Plays a role in the consolidation of synaptic plasticity, learning as well as formation of long-term memory. Plays a role in neurite outgrowth inhibition. Plays a proapoptotic role in response to glucose deprivation. Promotes global cellular protein synthesis repression in response to UV irradiation independently of the stress-activated protein kinase/c-Jun N-terminal kinase (SAPK/JNK) and p38 MAPK signaling pathways. Plays a role in the antiviral response against alphavirus infection; impairs early viral mRNA translation of the incoming genomic virus RNA, thus preventing alphavirus replication. (Microbial infection) Plays a role in modulating the adaptive immune response to yellow fever virus infection; promotes dendritic cells to initiate autophagy and antigene presentation to both CD4(+) and CD8(+) T-cells under amino acid starvation. This Homo sapiens (Human) protein is eIF-2-alpha kinase GCN2.